The sequence spans 382 residues: uncharacterized protein (382 aa).

A run of 12 helical transmembrane segments spans residues Val-8–Leu-28, Met-45–Ile-65, Tyr-75–Trp-95, Phe-102–Ser-122, Leu-131–Ser-151, Leu-157–Phe-177, Leu-204–Pro-224, Gly-231–Gly-251, Val-270–Pro-290, Ala-291–Cys-311, Ala-325–Met-345, and Ser-349–Leu-369.

The protein belongs to the major facilitator superfamily. YcaD (TC 2.A.1.26) family.

The protein resides in the cell inner membrane. This is an uncharacterized protein from Salmonella agona (strain SL483).